Reading from the N-terminus, the 436-residue chain is GTPase Obg (436 aa).

An Obg domain is found at 2 to 160 (SMFLDTAKIK…RELQLELKIL (159 aa)). The region spanning 161-338 (ADVGLVGFPS…LLDATAELLD (178 aa)) is the OBG-type G domain. GTP contacts are provided by residues 167 to 174 (GFPSVGKS), 192 to 196 (FTTIV), 214 to 217 (DLPG), 284 to 287 (NKMD), and 319 to 321 (SGL). Mg(2+) contacts are provided by Ser-174 and Thr-194. Residues 358 to 436 (GFDEEEKAFE…IGKFEFEFVD (79 aa)) form the OCT domain.

Belongs to the TRAFAC class OBG-HflX-like GTPase superfamily. OBG GTPase family. In terms of assembly, monomer. Requires Mg(2+) as cofactor.

Its subcellular location is the cytoplasm. An essential GTPase which binds GTP, GDP and possibly (p)ppGpp with moderate affinity, with high nucleotide exchange rates and a fairly low GTP hydrolysis rate. Plays a role in control of the cell cycle, stress response, ribosome biogenesis and in those bacteria that undergo differentiation, in morphogenesis control. The chain is GTPase Obg from Streptococcus pneumoniae (strain CGSP14).